The following is a 647-amino-acid chain: Nucleoside triphosphatase I (647 aa).

The 165-residue stretch at Phe48 to Asn212 folds into the Helicase ATP-binding domain. Residue Trp61–Thr68 coordinates ATP. The short motif at Asp150 to His153 is the DEXH box element. Positions Tyr378–Lys541 constitute a Helicase C-terminal domain. Positions Asp467–Ile533 are binding to the cap-specific mRNA (nucleoside-2'-O-)-methyltransferase.

Belongs to the helicase family. NPH I subfamily. As to quaternary structure, monomer. Interacts (via C-terminus) with RAP94 (via N-terminus). Interacts with the cap-specific mRNA (nucleoside-2'-O-)-methyltransferase.

It localises to the virion. It catalyses the reaction a ribonucleoside 5'-triphosphate + H2O = a ribonucleoside 5'-diphosphate + phosphate + H(+). Functionally, DNA-dependent ATPase required for providing the needed energy to achieve the termination of early transcripts. Acts in concert with the RAP94 subunit of the virion RNA polymerase and the capping enzyme/VTF to catalyze release of UUUUUNU-containing nascent RNA from the elongation complex. NPH-I must bind ssDNA in order to exhibit ATPase activity. This Choristoneura fumiferana (Spruce budworm moth) protein is Nucleoside triphosphatase I (NPH1).